The sequence spans 247 residues: ATP synthase subunit a 1 (247 aa).

6 consecutive transmembrane segments (helical) span residues 32 to 52, 82 to 102, 112 to 132, 141 to 161, 181 to 201, and 206 to 226; these read YMLL…RALV, FFPL…VGII, IIVT…YGFY, LFVP…IEII, GHVT…LGFV, and ALLP…VAFL.

This sequence belongs to the ATPase A chain family. In terms of assembly, F-type ATPases have 2 components, CF(1) - the catalytic core - and CF(0) - the membrane proton channel. CF(1) has five subunits: alpha(3), beta(3), gamma(1), delta(1), epsilon(1). CF(0) has four main subunits: a, b, b' and c.

It is found in the cell inner membrane. Its function is as follows. Key component of the proton channel; it plays a direct role in the translocation of protons across the membrane. This is ATP synthase subunit a 1 from Bradyrhizobium sp. (strain BTAi1 / ATCC BAA-1182).